The sequence spans 427 residues: UPF0229 protein bll6755 (427 aa).

The segment at 86–107 (DYLQRSGQGSAKDSGPGEGDSE) is disordered.

It belongs to the UPF0229 family.

The protein is UPF0229 protein bll6755 of Bradyrhizobium diazoefficiens (strain JCM 10833 / BCRC 13528 / IAM 13628 / NBRC 14792 / USDA 110).